The chain runs to 400 residues: Enoyl-[acyl-carrier-protein] reductase [NADH] (400 aa).

Residues 74–75 (FE), 111–112 (DA), and 139–140 (VA) contribute to the NAD(+) site. A substrate-binding site is contributed by Tyr225. Tyr235 serves as the catalytic Proton donor. Residues Lys244 and 273–275 (VVT) each bind NAD(+).

It belongs to the TER reductase family. As to quaternary structure, monomer.

The enzyme catalyses a 2,3-saturated acyl-[ACP] + NAD(+) = a (2E)-enoyl-[ACP] + NADH + H(+). It functions in the pathway lipid metabolism; fatty acid biosynthesis. Functionally, involved in the final reduction of the elongation cycle of fatty acid synthesis (FAS II). Catalyzes the reduction of a carbon-carbon double bond in an enoyl moiety that is covalently linked to an acyl carrier protein (ACP). This chain is Enoyl-[acyl-carrier-protein] reductase [NADH], found in Psychromonas ingrahamii (strain DSM 17664 / CCUG 51855 / 37).